Reading from the N-terminus, the 87-residue chain is Retinal rod rhodopsin-sensitive cGMP 3',5'-cyclic phosphodiesterase subunit gamma (87 aa).

At methionine 1 the chain carries N-acetylmethionine. A disordered region spans residues 16–54 (VVGGPVTPRKGPPKFKQRQTRQFKSKPPKKGVQGFGDDI). Over residues 26 to 44 (GPPKFKQRQTRQFKSKPPK) the composition is skewed to basic residues.

Belongs to the rod/cone cGMP-PDE gamma subunit family. In terms of assembly, oligomer composed of two catalytic chains (alpha and beta), an inhibitory chain (gamma) and the delta chain.

The catalysed reaction is 3',5'-cyclic GMP + H2O = GMP + H(+). Its function is as follows. Participates in processes of transmission and amplification of the visual signal. cGMP-PDEs are the effector molecules in G-protein-mediated phototransduction in vertebrate rods and cones. This is Retinal rod rhodopsin-sensitive cGMP 3',5'-cyclic phosphodiesterase subunit gamma (PDE6G) from Cavia porcellus (Guinea pig).